Here is a 142-residue protein sequence, read N- to C-terminus: Cell division protein SepF (142 aa).

A compositionally biased stretch (acidic residues) spans 21–31; it reads ETTTVEEEREE. The disordered stretch occupies residues 21–46; sequence ETTTVEEEREEQESSHKRQPAISRTN.

This sequence belongs to the SepF family. Homodimer. Interacts with FtsZ.

It is found in the cytoplasm. In terms of biological role, cell division protein that is part of the divisome complex and is recruited early to the Z-ring. Probably stimulates Z-ring formation, perhaps through the cross-linking of FtsZ protofilaments. Its function overlaps with FtsA. The polypeptide is Cell division protein SepF (Brevibacillus brevis (strain 47 / JCM 6285 / NBRC 100599)).